A 152-amino-acid chain; its full sequence is Vasotocin-neurophysin VT 1 (152 aa).

An N-terminal signal peptide occupies residues 1-19; sequence MSDSFLPTCILCLLALSSA. C20 and C25 form a disulfide bridge. G28 bears the Glycine amide mark. Intrachain disulfides connect C40-C84, C43-C57, C51-C74, C58-C64, C91-C103, C97-C115, and C104-C109.

The protein belongs to the vasopressin/oxytocin family.

The protein resides in the secreted. Vasotocin is an antidiuretic hormone. The polypeptide is Vasotocin-neurophysin VT 1 (Catostomus commersonii (White sucker)).